A 669-amino-acid polypeptide reads, in one-letter code: p135Gag-Myb-Ets-transforming protein (669 aa).

The span at 1-10 (NSTMRRKVEQ) shows a compositional bias: basic and acidic residues. Disordered regions lie at residues 1 to 27 (NSTM…SATT) and 132 to 153 (TQNH…NTMT). Residues 90–142 (PAAAAIQRHYNDEDPEKEKRIKELELLLMSTENELKGQQALPTQNHTANYPGW) are transcriptional activation domain. The PNT domain occupies 276–361 (ATFSGFAKEQ…EHLEILQKEE (86 aa)). Positions 556–640 (GSGPIQLWQF…AGKRYVYRFV (85 aa)) form a DNA-binding region, ETS.

The protein resides in the host nucleus. In terms of biological role, DNA-binding protein that specifically recognizes the sequence 5'-YAAC[GT]G-3'. The Myb-Ets protein induces predominantly erythroblastosis in chicken and transforms avian erythroblasts and immature myelomonocytic cells in culture. It appears that the Ets domain is responsible for the effects on erythroid cells and that the Myb domain encodes the myeloid-transforming capacity. The protein is p135Gag-Myb-Ets-transforming protein (GAG) of Avian leukemia virus E26.